Consider the following 298-residue polypeptide: Esterase Rv0045c (298 aa).

The active-site Nucleophile is the Ser122. Active-site residues include Asp146 and His277.

It belongs to the AB hydrolase superfamily. In terms of assembly, monomer.

It catalyses the reaction a carboxylic ester + H2O = an alcohol + a carboxylate + H(+). It carries out the reaction a butanoate ester + H2O = an aliphatic alcohol + butanoate + H(+). The enzyme catalyses an acetyl ester + H2O = an aliphatic alcohol + acetate + H(+). The catalysed reaction is a hexanoate ester + H2O = an aliphatic alcohol + hexanoate + H(+). It catalyses the reaction a tetradecanoate ester + H2O = an aliphatic alcohol + tetradecanoate + H(+). Hydrolysis of a fluorogenic ester substrate (MOAME) is allosterically inhibited by divalent transition metal cations (Cu(2+), Zn(2+), Ni(2+) and Co(2+)). Inhibition is largely due to a two order of magnitude drop in kcat, with relatively little change in KM. The thermal stability decreases with increasing concentrations of Ni(2+). In terms of biological role, esterase likely involved in ester/lipid metabolism. Shows strong substrate selectivity toward short, straight chain alkyl esters with the highest activity toward four atom chains. The physiological substrate is unknown. Is able to hydrolyze ester bonds within a wide range of p-nitrophenyl derivatives (C2-C14) in vitro. The sequence is that of Esterase Rv0045c from Mycobacterium tuberculosis (strain ATCC 25618 / H37Rv).